Consider the following 86-residue polypeptide: UPF0437 protein Ava_4254 (86 aa).

This sequence belongs to the UPF0437 family.

The chain is UPF0437 protein Ava_4254 from Trichormus variabilis (strain ATCC 29413 / PCC 7937) (Anabaena variabilis).